The sequence spans 238 residues: UDP-2,3-diacylglucosamine hydrolase (238 aa).

Mn(2+)-binding residues include aspartate 8, histidine 10, aspartate 41, asparagine 78, and histidine 113. 78 to 79 (NR) is a binding site for substrate. Residues aspartate 121, serine 159, asparagine 163, lysine 166, and histidine 194 each contribute to the substrate site. Mn(2+) contacts are provided by histidine 194 and histidine 196.

It belongs to the LpxH family. The cofactor is Mn(2+).

It is found in the cell inner membrane. It carries out the reaction UDP-2-N,3-O-bis[(3R)-3-hydroxytetradecanoyl]-alpha-D-glucosamine + H2O = 2-N,3-O-bis[(3R)-3-hydroxytetradecanoyl]-alpha-D-glucosaminyl 1-phosphate + UMP + 2 H(+). Its pathway is glycolipid biosynthesis; lipid IV(A) biosynthesis; lipid IV(A) from (3R)-3-hydroxytetradecanoyl-[acyl-carrier-protein] and UDP-N-acetyl-alpha-D-glucosamine: step 4/6. Functionally, hydrolyzes the pyrophosphate bond of UDP-2,3-diacylglucosamine to yield 2,3-diacylglucosamine 1-phosphate (lipid X) and UMP by catalyzing the attack of water at the alpha-P atom. Involved in the biosynthesis of lipid A, a phosphorylated glycolipid that anchors the lipopolysaccharide to the outer membrane of the cell. The sequence is that of UDP-2,3-diacylglucosamine hydrolase from Shewanella pealeana (strain ATCC 700345 / ANG-SQ1).